The sequence spans 508 residues: Photosystem II CP47 reaction center protein (508 aa).

Helical transmembrane passes span 21-36 (SVHIMHTALVAGWAGS), 101-115 (IVLSGLCFLAAIWHW), 140-156 (GIHLFLSGVACFGFGAF), 203-218 (IAAGTLGILAGLFHLS), 237-252 (VLSSSIAAVFFAAFVV), and 457-472 (SFALLFFFGHIWHGAR).

Belongs to the PsbB/PsbC family. PsbB subfamily. As to quaternary structure, PSII is composed of 1 copy each of membrane proteins PsbA, PsbB, PsbC, PsbD, PsbE, PsbF, PsbH, PsbI, PsbJ, PsbK, PsbL, PsbM, PsbT, PsbX, PsbY, PsbZ, Psb30/Ycf12, at least 3 peripheral proteins of the oxygen-evolving complex and a large number of cofactors. It forms dimeric complexes. Requires Binds multiple chlorophylls. PSII binds additional chlorophylls, carotenoids and specific lipids. as cofactor.

It is found in the plastid. The protein resides in the chloroplast thylakoid membrane. Functionally, one of the components of the core complex of photosystem II (PSII). It binds chlorophyll and helps catalyze the primary light-induced photochemical processes of PSII. PSII is a light-driven water:plastoquinone oxidoreductase, using light energy to abstract electrons from H(2)O, generating O(2) and a proton gradient subsequently used for ATP formation. This Pelargonium hortorum (Common geranium) protein is Photosystem II CP47 reaction center protein.